Here is a 67-residue protein sequence, read N- to C-terminus: Large ribosomal subunit protein bL35 (67 aa).

The segment at 1-41 is disordered; the sequence is MPKMKTHRGAAKRFKKTGTGKLKRSHAYTSHMFRHKSQKQK.

Belongs to the bacterial ribosomal protein bL35 family.

The protein is Large ribosomal subunit protein bL35 of Shouchella clausii (strain KSM-K16) (Alkalihalobacillus clausii).